Reading from the N-terminus, the 676-residue chain is Rho guanine nucleotide exchange factor 37 (676 aa).

The segment at 1-26 is disordered; the sequence is MADFETDEASSKSESPEQEGQGSEDK. The 184-residue stretch at 30 to 213 folds into the DH domain; the sequence is HQRLAIRELI…QDVNSNINEY (184 aa). The region spanning 254–455 is the BAR domain; the sequence is LKQEAGLVPR…LPHRHVSEPD (202 aa). SH3 domains are found at residues 506 to 569 and 603 to 666; these read GPGK…LYHP and PTMS…RTPS. Disordered stretches follow at residues 568 to 601 and 657 to 676; these read HPIN…SVPT and PSNF…NLPS.

In terms of biological role, may act as a guanine nucleotide exchange factor (GEF). This chain is Rho guanine nucleotide exchange factor 37 (Arhgef37), found in Rattus norvegicus (Rat).